The primary structure comprises 1200 residues: Chromosome partition protein Smc (1200 aa).

33 to 40 (PNGSGKSN) lines the ATP pocket. The segment at 90 to 109 (GENLSEPGANHNGNGNGAKI) is disordered. Positions 202–528 (EVQDREERCQ…AASQAQQEVQ (327 aa)) form a coiled coil. In terms of domain architecture, SMC hinge spans 542–656 (PGVCGLVAQL…VFDTLVNARN (115 aa)). Residues 692–1046 (TMVSEDTAEV…ERTELLLRIE (355 aa)) are a coiled coil.

This sequence belongs to the SMC family. In terms of assembly, homodimer.

It is found in the cytoplasm. In terms of biological role, required for chromosome condensation and partitioning. This Synechocystis sp. (strain ATCC 27184 / PCC 6803 / Kazusa) protein is Chromosome partition protein Smc.